A 525-amino-acid chain; its full sequence is Ent-kaurene oxidase (525 aa).

Residues 31–51 form a helical membrane-spanning segment; that stretch reads VHWLIYVAFGAWLCSYVIHVL. Cys-466 contacts heme.

This sequence belongs to the cytochrome P450 family. Requires heme as cofactor.

Its subcellular location is the membrane. It catalyses the reaction ent-kaur-16-ene + 3 reduced [NADPH--hemoprotein reductase] + 3 O2 = ent-kaur-16-en-19-oate + 3 oxidized [NADPH--hemoprotein reductase] + 4 H2O + 4 H(+). It participates in plant hormone biosynthesis; gibberellin biosynthesis. In terms of biological role, catalyzes three successive oxidations of the 4-methyl group of ent-kaurene giving kaurenoic acid, a key step in gibberellin (GA) biosynthesis. This chain is Ent-kaurene oxidase (CYP503A1), found in Fusarium fujikuroi (Bakanae and foot rot disease fungus).